Reading from the N-terminus, the 1405-residue chain is DNA-directed RNA polymerase III subunit rpc1 (1405 aa).

Cys-66, Cys-69, Cys-76, His-79, Cys-106, Cys-109, and Cys-153 together coordinate Zn(2+). Mg(2+)-binding residues include Asp-493, Asp-495, and Asp-497. The interval 838 to 850 (PTEFLFHAISGRE) is bridging helix.

This sequence belongs to the RNA polymerase beta' chain family. As to quaternary structure, component of the RNA polymerase III (Pol III) complex consisting of 17 subunits.

Its subcellular location is the nucleus. The catalysed reaction is RNA(n) + a ribonucleoside 5'-triphosphate = RNA(n+1) + diphosphate. In terms of biological role, DNA-dependent RNA polymerase catalyzes the transcription of DNA into RNA using the four ribonucleoside triphosphates as substrates. Largest and catalytic core component of RNA polymerase III which synthesizes small RNAs, such as 5S rRNA and tRNAs. Forms the polymerase active center together with the second largest subunit. A single-stranded DNA template strand of the promoter is positioned within the central active site cleft of Pol III. A bridging helix emanates from RPC1 and crosses the cleft near the catalytic site and is thought to promote translocation of Pol III by acting as a ratchet that moves the RNA-DNA hybrid through the active site by switching from straight to bent conformations at each step of nucleotide addition. The polypeptide is DNA-directed RNA polymerase III subunit rpc1 (rpc1) (Schizosaccharomyces pombe (strain 972 / ATCC 24843) (Fission yeast)).